We begin with the raw amino-acid sequence, 193 residues long: MTLGIDEAGRGCLVGSLFVAGVVCGEKIALDFLKMGLKDSKKLSQNKRFFLEDKIKSHDEVKFCVIKKSAGEIDSLSLGVCLKLAVQEILEKLSPLAQTINIDGNTAFGLNKRYSNLKTIIKGDEKIAQIAMASVLAKTSKDREMLELHALFKEYGWDKNCGYGTKKHIEAIAKLGATPFHRHSFALKNNWFS.

One can recognise an RNase H type-2 domain in the interval 1 to 193 (MTLGIDEAGR…SFALKNNWFS (193 aa)). Positions 6, 7, and 103 each coordinate a divalent metal cation.

It belongs to the RNase HII family. Mn(2+) is required as a cofactor. Mg(2+) serves as cofactor.

It is found in the cytoplasm. The enzyme catalyses Endonucleolytic cleavage to 5'-phosphomonoester.. Functionally, endonuclease that specifically degrades the RNA of RNA-DNA hybrids. The protein is Ribonuclease HII of Helicobacter acinonychis (strain Sheeba).